A 314-amino-acid polypeptide reads, in one-letter code: Transmembrane protein 248 (314 aa).

A helical transmembrane segment spans residues 21-41 (VVFMISVSAMAIAFLTLGYFF). Residues 78-106 (LSNDTTTPESTMTVGQARSSTQPPQSLEE) form a disordered region. Over residues 80-105 (NDTTTPESTMTVGQARSSTQPPQSLE) the composition is skewed to polar residues. The next 3 membrane-spanning stretches (helical) occupy residues 179-199 (QAVFTACMTLTAAPGVFPVTV), 236-258 (FWCYKGAIGKVYHALNPKLTVVV), and 270-290 (LMHTSYFLFVMVITMFCYAVI).

This sequence belongs to the TMEM248 family.

It is found in the membrane. This is Transmembrane protein 248 (Tmem248) from Mus musculus (Mouse).